We begin with the raw amino-acid sequence, 310 residues long: Bacteriochlorophyll synthase 34 kDa chain (310 aa).

Residues 1 to 13 (MSDMSDQTRLSSP) are compositionally biased toward polar residues. Residues 1–20 (MSDMSDQTRLSSPPSLPLHK) form a disordered region. The next 8 membrane-spanning stretches (helical) occupy residues 39–59 (VTWF…GALG), 67–87 (LLLG…VVND), 112–132 (HVYI…LFLG), 134–154 (QVAF…LRPI), 166–186 (LVAI…FAPL), 187–207 (TGES…IMTV), 248–268 (VIGL…AILL), and 287–307 (VFFN…AAIG).

It is found in the cell membrane. Its pathway is porphyrin-containing compound metabolism; bacteriochlorophyll biosynthesis (light-independent). Functionally, catalyzes the esterification of bacteriochlorophyllide a by geranylgeraniol-PPi. The chain is Bacteriochlorophyll synthase 34 kDa chain (bchG) from Chloroflexus aurantiacus (strain ATCC 29366 / DSM 635 / J-10-fl).